Here is a 394-residue protein sequence, read N- to C-terminus: Methane monooxygenase component A beta chain (394 aa).

M.trichosporium has two forms of methane monooxygenase, a soluble and a membrane-bound type. The soluble type consists of four components (A to D): protein A, comprising three chains, in an alpha-2, beta-2, gamma-2 configuration, is a nonheme iron protein containing an unusual mu-hydroxo bridge structure at its active site and interacts with both oxygen and methane.

It catalyses the reaction methane + NADH + O2 + H(+) = methanol + NAD(+) + H2O. It carries out the reaction methane + NADPH + O2 + H(+) = methanol + NADP(+) + H2O. Responsible for the initial oxygenation of methane to methanol in methanotrophs. It also catalyzes the monohydroxylation of a variety of unactivated alkenes, alicyclic, aromatic and heterocyclic compounds. This chain is Methane monooxygenase component A beta chain (mmoY), found in Methylosinus trichosporium.